The chain runs to 386 residues: N-acetylneuraminate epimerase (386 aa).

Residues 1 to 29 (MGMQMKNFKKMMTLMALCFSVAITTSGYA) form the signal peptide. Kelch repeat units follow at residues 51–95 (VIYV…VFLN), 97–149 (ELYV…VKLN), 151–186 (TMVLITGGVNEHIFDKYFIDIAAAAADESEKNKVIY), 187–232 (NYFN…VMGN), 235–284 (LMLI…LAGA), 306–355 (QNYT…SYGD), and 357–386 (VFLIGGENAKGKPVSSVTSFTMRDGNLLIK). Glu241 serves as the catalytic Proton acceptor.

This sequence belongs to the NanM family. As to quaternary structure, homodimer.

The protein resides in the periplasm. The catalysed reaction is N-acetyl-alpha-neuraminate = N-acetyl-beta-neuraminate. Functionally, converts alpha-N-acetylneuranimic acid (Neu5Ac) to the beta-anomer, accelerating the equilibrium between the alpha- and beta-anomers. Probably facilitates sialidase-negative bacteria to compete successfully for limited amounts of extracellular Neu5Ac, which is likely taken up in the beta-anomer. In addition, the rapid removal of sialic acid from solution might be advantageous to the bacterium to damp down host responses. This Salmonella typhimurium (strain LT2 / SGSC1412 / ATCC 700720) protein is N-acetylneuraminate epimerase.